Reading from the N-terminus, the 119-residue chain is UPF0292 protein TV1259 (119 aa).

The Toprim domain maps to 11–93; it reads SIPIIVEGRN…YVDLYLWNFI (83 aa). Residues Glu17, Asp62, and Asp64 each contribute to the Mg(2+) site.

The protein belongs to the UPF0292 family. Mg(2+) is required as a cofactor.

In Thermoplasma volcanium (strain ATCC 51530 / DSM 4299 / JCM 9571 / NBRC 15438 / GSS1), this protein is UPF0292 protein TV1259.